Consider the following 685-residue polypeptide: Protein OCTOPUS (685 aa).

Disordered regions lie at residues 1–34, 152–202, and 280–314; these read MNPATDPVSAAAAALAPPPQPPQPHRLSTSCNRH, RNLP…DYVE, and KWRQNQKMKKRRNGGDHRPGSARLPVEKPIGRQLR. The span at 179–202 shows a compositional bias: acidic residues; that stretch reads VNDEGEAESDDEELEEEEEEDYVE. A compositionally biased stretch (basic residues) spans 280 to 291; sequence KWRQNQKMKKRR. A compositionally biased stretch (basic and acidic residues) spans 292–314; that stretch reads NGGDHRPGSARLPVEKPIGRQLR. Ser-318 carries the post-translational modification Phosphoserine. The disordered stretch occupies residues 419–471; it reads VEEPAPPPPVVNQTNGVSDPVIIPGGSIQTRDYYTDSSSRRRKSLDRSSSSMR. Positions 549 to 578 form a coiled coil; sequence LIYRKSVNKYEEEEEEEEDRYRRLNGGMVE. The interval 584–640 is disordered; sequence SWPELRNGGGGGGGPRMVRSNSNVSWRSSGGGSARKVNGLDRRNKSSRYSPKNGENG. Positions 601-611 are enriched in low complexity; sequence VRSNSNVSWRS.

Belongs to the OCTOPUS family. As to quaternary structure, interacts with VCC. Post-translationally, phosphorylation at Ser-318 amplifies the promotion of protophloem differentiation. In terms of tissue distribution, expressed in provascular cells and phloem initials (e.g. protophloem, metaphloem, sieve element precursor cells and sieve element procambium precursor cells).

Its subcellular location is the cell membrane. It localises to the cytoplasm. Its function is as follows. Potentiates primary root protophloem differentiation. Required, together with VCC, for embryo provasculature development and cotyledon vascular complexity and connectivity. Regulates roots architecture. Mediates the recruitment of ASK7/BIN2 to the plasma membrane. This is Protein OCTOPUS from Arabidopsis thaliana (Mouse-ear cress).